Here is a 279-residue protein sequence, read N- to C-terminus: METESTGTPTGETRLALVRRARRIDRILAETYPYAVAELDFETPFELLVATVLSAQTTDVRVNAATPALFARFPDAHAMAAATEPELQELVRSTGFYRNKASAILRLSQELVGRHDGEVPARLEDLVALPGVGRKTAFVVLGNAFGQPGITVDTHFGRLARRLGFTDETDPGKGRARRGRPVPPARDWTMLSHRLIFHGRRVCHARRPACGRCPIARWCPSYAAGETDPERARALLAYELKPGREELLELLRAGRTAGAAGPRPRAGGXAPGLPAQPFR.

The HhH domain occupies 123–142; it reads LEDLVALPGVGRKTAFVVLG. [4Fe-4S] cluster-binding residues include Cys-203, Cys-210, Cys-213, and Cys-219. Positions 256-279 are disordered; sequence TAGAAGPRPRAGGXAPGLPAQPFR.

This sequence belongs to the Nth/MutY family. [4Fe-4S] cluster is required as a cofactor.

Functionally, DNA repair enzyme that has both DNA N-glycosylase activity and AP-lyase activity. Initiates repair at cis-syn pyrimidine dimers. Proceeds via an imino enzyme:DNA intermediate. The protein is Ultraviolet N-glycosylase/AP lyase (pdg) of Micrococcus luteus (strain ATCC 4698 / DSM 20030 / JCM 1464 / CCM 169 / CCUG 5858 / IAM 1056 / NBRC 3333 / NCIMB 9278 / NCTC 2665 / VKM Ac-2230) (Micrococcus lysodeikticus).